A 461-amino-acid chain; its full sequence is Bifunctional protein GlmU (461 aa).

The tract at residues 1–235 (MKAIILAAGL…ITEIFGVNDR (235 aa)) is pyrophosphorylase. Residues 6–9 (LAAG), Lys20, Gln71, and 77–78 (GT) contribute to the UDP-N-acetyl-alpha-D-glucosamine site. Residue Asp102 participates in Mg(2+) binding. UDP-N-acetyl-alpha-D-glucosamine-binding residues include Gly145, Glu160, Asn175, and Asn233. Asn233 contributes to the Mg(2+) binding site. The linker stretch occupies residues 236-256 (WELSFAESVIKMRILENLARS). The N-acetyltransferase stretch occupies residues 257 to 461 (GVTIHSPESV…LEDKSKVKDE (205 aa)). Residues Arg339 and Lys357 each contribute to the UDP-N-acetyl-alpha-D-glucosamine site. The active-site Proton acceptor is the His369. UDP-N-acetyl-alpha-D-glucosamine contacts are provided by Tyr372 and Asn383. Residues Ala386, Ser411, Gly429, and Arg446 each contribute to the acetyl-CoA site.

The protein in the N-terminal section; belongs to the N-acetylglucosamine-1-phosphate uridyltransferase family. This sequence in the C-terminal section; belongs to the transferase hexapeptide repeat family. In terms of assembly, homotrimer. Mg(2+) serves as cofactor.

It localises to the cytoplasm. It carries out the reaction alpha-D-glucosamine 1-phosphate + acetyl-CoA = N-acetyl-alpha-D-glucosamine 1-phosphate + CoA + H(+). The enzyme catalyses N-acetyl-alpha-D-glucosamine 1-phosphate + UTP + H(+) = UDP-N-acetyl-alpha-D-glucosamine + diphosphate. It functions in the pathway nucleotide-sugar biosynthesis; UDP-N-acetyl-alpha-D-glucosamine biosynthesis; N-acetyl-alpha-D-glucosamine 1-phosphate from alpha-D-glucosamine 6-phosphate (route II): step 2/2. The protein operates within nucleotide-sugar biosynthesis; UDP-N-acetyl-alpha-D-glucosamine biosynthesis; UDP-N-acetyl-alpha-D-glucosamine from N-acetyl-alpha-D-glucosamine 1-phosphate: step 1/1. Its pathway is bacterial outer membrane biogenesis; LPS lipid A biosynthesis. Its function is as follows. Catalyzes the last two sequential reactions in the de novo biosynthetic pathway for UDP-N-acetylglucosamine (UDP-GlcNAc). The C-terminal domain catalyzes the transfer of acetyl group from acetyl coenzyme A to glucosamine-1-phosphate (GlcN-1-P) to produce N-acetylglucosamine-1-phosphate (GlcNAc-1-P), which is converted into UDP-GlcNAc by the transfer of uridine 5-monophosphate (from uridine 5-triphosphate), a reaction catalyzed by the N-terminal domain. The chain is Bifunctional protein GlmU from Hydrogenobaculum sp. (strain Y04AAS1).